Consider the following 304-residue polypeptide: Acetylglutamate kinase (304 aa).

Substrate contacts are provided by residues 82 to 83 (GG), arginine 104, and asparagine 197.

It belongs to the acetylglutamate kinase family. ArgB subfamily.

The protein resides in the cytoplasm. It carries out the reaction N-acetyl-L-glutamate + ATP = N-acetyl-L-glutamyl 5-phosphate + ADP. Its pathway is amino-acid biosynthesis; L-arginine biosynthesis; N(2)-acetyl-L-ornithine from L-glutamate: step 2/4. Catalyzes the ATP-dependent phosphorylation of N-acetyl-L-glutamate. This is Acetylglutamate kinase from Prochlorococcus marinus (strain NATL2A).